The following is a 230-amino-acid chain: Demethylmenaquinone methyltransferase (230 aa).

Residues threonine 57, aspartate 77, 101–102 (DI), and serine 118 each bind S-adenosyl-L-methionine.

Belongs to the class I-like SAM-binding methyltransferase superfamily. MenG/UbiE family.

It carries out the reaction a 2-demethylmenaquinol + S-adenosyl-L-methionine = a menaquinol + S-adenosyl-L-homocysteine + H(+). Its pathway is quinol/quinone metabolism; menaquinone biosynthesis; menaquinol from 1,4-dihydroxy-2-naphthoate: step 2/2. Functionally, methyltransferase required for the conversion of demethylmenaquinol (DMKH2) to menaquinol (MKH2). The polypeptide is Demethylmenaquinone methyltransferase (Chlamydia felis (strain Fe/C-56) (Chlamydophila felis)).